Reading from the N-terminus, the 519-residue chain is Ribonuclease Y (519 aa).

The chain crosses the membrane as a helical span at residues 3–23; that stretch reads PMTVLISILLTLLGLVVGYYV. A KH domain is found at 209–272; it reads TVSVVNLPND…ETARIALDKL (64 aa). One can recognise an HD domain in the interval 335 to 428; that stretch reads VLKHSMEVAF…VAAADALSAA (94 aa).

Belongs to the RNase Y family.

Its subcellular location is the cell membrane. Its function is as follows. Endoribonuclease that initiates mRNA decay. The polypeptide is Ribonuclease Y (Bacillus velezensis (strain DSM 23117 / BGSC 10A6 / LMG 26770 / FZB42) (Bacillus amyloliquefaciens subsp. plantarum)).